The sequence spans 459 residues: 23S rRNA (uracil-C(5))-methyltransferase RlmCD (459 aa).

The region spanning 6–64 (PVEKNEYYDVTFEDLTHEGAGVAKVQGFPIFVPNALPEEKAQIKVTRVKKGFAFGRLIE) is the TRAM domain. Positions 77, 83, 86, and 166 each coordinate [4Fe-4S] cluster. Residues Gln290, Tyr319, Glu340, and Asp388 each contribute to the S-adenosyl-L-methionine site. The active-site Nucleophile is Cys415.

The protein belongs to the class I-like SAM-binding methyltransferase superfamily. RNA M5U methyltransferase family.

The catalysed reaction is uridine(747) in 23S rRNA + S-adenosyl-L-methionine = 5-methyluridine(747) in 23S rRNA + S-adenosyl-L-homocysteine + H(+). It carries out the reaction uridine(1939) in 23S rRNA + S-adenosyl-L-methionine = 5-methyluridine(1939) in 23S rRNA + S-adenosyl-L-homocysteine + H(+). In terms of biological role, catalyzes the formation of 5-methyl-uridine at positions 747 (m5U747) and 1939 (m5U1939) in 23S rRNA. The protein is 23S rRNA (uracil-C(5))-methyltransferase RlmCD (rlmCD) of Bacillus subtilis (strain 168).